The primary structure comprises 325 residues: MQELRLVLILVGALAIAALLFHGLWTSRKETSSKFGKKVDIDFDSDVDDEQAAPMRGFDQPKEDVVVQKERKEPAFAREEVPTSDDPLFEGTVSSESNKFTEQEKPTVQQAQPQPVVQQVQEPAVGRIEPEAKPVAAPVKREEPTISFSAIDDEVLTQPEPIQAKVDIPETSTYLEPEIIIAEPEPEPEQDVIVINVHGMGSDRFSGNRLFNSLEQNGLVFGDMAIYHRHSDLSGAGKVLFSVANMVSPGHFQVPEGEEFSTPGISFFLPLPCYGDAEHNFKLMLQTAQMVSSELGGNVLDEKRDMLTPNKIDEYKQRVKVFCRK.

Residues 1 to 5 (MQELR) lie on the Periplasmic side of the membrane. A helical membrane pass occupies residues 6–26 (LVLILVGALAIAALLFHGLWT). The Cytoplasmic portion of the chain corresponds to 27–325 (SRKETSSKFG…KQRVKVFCRK (299 aa)).

This sequence belongs to the ZipA family. As to quaternary structure, interacts with FtsZ via their C-terminal domains.

Its subcellular location is the cell inner membrane. Essential cell division protein that stabilizes the FtsZ protofilaments by cross-linking them and that serves as a cytoplasmic membrane anchor for the Z ring. Also required for the recruitment to the septal ring of downstream cell division proteins. The sequence is that of Cell division protein ZipA from Aliivibrio fischeri (strain MJ11) (Vibrio fischeri).